Reading from the N-terminus, the 159-residue chain is Small ribosomal subunit protein uS7 (159 aa).

The protein belongs to the universal ribosomal protein uS7 family. Part of the 30S ribosomal subunit. Contacts proteins S9 and S11.

In terms of biological role, one of the primary rRNA binding proteins, it binds directly to 16S rRNA where it nucleates assembly of the head domain of the 30S subunit. Is located at the subunit interface close to the decoding center, probably blocks exit of the E-site tRNA. This chain is Small ribosomal subunit protein uS7, found in Sulfurihydrogenibium sp. (strain YO3AOP1).